The chain runs to 84 residues: Small ribosomal subunit protein uS17 (84 aa).

It belongs to the universal ribosomal protein uS17 family. Part of the 30S ribosomal subunit.

One of the primary rRNA binding proteins, it binds specifically to the 5'-end of 16S ribosomal RNA. This chain is Small ribosomal subunit protein uS17, found in Enterobacter sp. (strain 638).